A 229-amino-acid chain; its full sequence is MKIGIVGAMAQEVQMLADLMQDKRVTQVASCTIYEGMIHGKAVALLQSGIGKVAAAIGATLLLEMCKPDLVINTGSAGGVATGLNVGDIVISDETVYHDADVTAFGYAKGQLPACPARFQSDEKLVQLAEKIAVQQQQQVKRGLICSGDSFIQGGTPLAQIKADFPTVMAVEMEATAIAQVCHAFNVPFVVVRAISDSGDGEASMSFEEFLPLAAKQSSAMVLEMIDNL.

The Proton acceptor role is filled by Glu-12. Residues Gly-78, Ile-152, and 173 to 174 (ME) contribute to the substrate site. Asp-197 acts as the Proton donor in catalysis.

Belongs to the PNP/UDP phosphorylase family. MtnN subfamily.

It carries out the reaction S-adenosyl-L-homocysteine + H2O = S-(5-deoxy-D-ribos-5-yl)-L-homocysteine + adenine. It catalyses the reaction S-methyl-5'-thioadenosine + H2O = 5-(methylsulfanyl)-D-ribose + adenine. The catalysed reaction is 5'-deoxyadenosine + H2O = 5-deoxy-D-ribose + adenine. It participates in amino-acid biosynthesis; L-methionine biosynthesis via salvage pathway; S-methyl-5-thio-alpha-D-ribose 1-phosphate from S-methyl-5'-thioadenosine (hydrolase route): step 1/2. Functionally, catalyzes the irreversible cleavage of the glycosidic bond in both 5'-methylthioadenosine (MTA) and S-adenosylhomocysteine (SAH/AdoHcy) to adenine and the corresponding thioribose, 5'-methylthioribose and S-ribosylhomocysteine, respectively. Also cleaves 5'-deoxyadenosine, a toxic by-product of radical S-adenosylmethionine (SAM) enzymes, into 5-deoxyribose and adenine. In Pasteurella multocida (strain Pm70), this protein is 5'-methylthioadenosine/S-adenosylhomocysteine nucleosidase.